A 179-amino-acid polypeptide reads, in one-letter code: GTP-dependent dephospho-CoA kinase (179 aa).

Aspartate 55, valine 57, aspartate 74, lysine 76, and glutamate 128 together coordinate GTP.

The protein belongs to the GTP-dependent DPCK family.

The catalysed reaction is 3'-dephospho-CoA + GTP = GDP + CoA + H(+). Its pathway is cofactor biosynthesis; coenzyme A biosynthesis. Catalyzes the GTP-dependent phosphorylation of the 3'-hydroxyl group of dephosphocoenzyme A to form coenzyme A (CoA). The polypeptide is GTP-dependent dephospho-CoA kinase (Saccharolobus islandicus (strain M.16.27) (Sulfolobus islandicus)).